The sequence spans 312 residues: Very-long-chain 3-oxoacyl-CoA reductase (312 aa).

A helical transmembrane segment spans residues 4–24 (ALPAAGFLYWVGASTIAYLTL). 50 to 79 (GEWAVVTGGTDGIGKSYAEELAKRGMKIVL) is an NADP(+) binding site. The next 2 helical transmembrane spans lie at 182–202 (GVIL…LTVY) and 271–291 (GYVI…WIYF). Position 189 (Ser-189) interacts with substrate. The Proton acceptor role is filled by Tyr-202. The Di-lysine motif motif lies at 308–312 (KTKKN).

Belongs to the short-chain dehydrogenases/reductases (SDR) family. 17-beta-HSD 3 subfamily.

It localises to the endoplasmic reticulum membrane. It catalyses the reaction a very-long-chain (3R)-3-hydroxyacyl-CoA + NADP(+) = a very-long-chain 3-oxoacyl-CoA + NADPH + H(+). The enzyme catalyses 17beta-estradiol + NAD(+) = estrone + NADH + H(+). The catalysed reaction is 17beta-estradiol + NADP(+) = estrone + NADPH + H(+). It carries out the reaction 3-oxooctadecanoyl-CoA + NADPH + H(+) = (3R)-hydroxyoctadecanoyl-CoA + NADP(+). It catalyses the reaction (7Z,10Z,13Z,16Z)-3-oxodocosatetraenoyl-CoA + NADPH + H(+) = (3R)-hydroxy-(7Z,10Z,13Z,16Z)-docosatetraenoyl-CoA + NADP(+). The enzyme catalyses 3-oxo-(7Z,10Z,13Z,16Z,19Z)-docosapentaenoyl-CoA + NADPH + H(+) = (3R)-hydroxy-(7Z,10Z,13Z,16Z,19Z)-docosapentaenoyl-CoA + NADP(+). The catalysed reaction is (8Z,11Z,14Z)-3-oxoeicosatrienoyl-CoA + NADPH + H(+) = (3R)-hydroxy-(8Z,11Z,14Z)-eicosatrienoyl-CoA + NADP(+). It functions in the pathway lipid metabolism; fatty acid biosynthesis. The protein operates within steroid biosynthesis; estrogen biosynthesis. Its function is as follows. Catalyzes the second of the four reactions of the long-chain fatty acids elongation cycle. This endoplasmic reticulum-bound enzymatic process, allows the addition of two carbons to the chain of long- and very long-chain fatty acids/VLCFAs per cycle. This enzyme has a 3-ketoacyl-CoA reductase activity, reducing 3-ketoacyl-CoA to 3-hydroxyacyl-CoA, within each cycle of fatty acid elongation. Thereby, it may participate in the production of VLCFAs of different chain lengths that are involved in multiple biological processes as precursors of membrane lipids and lipid mediators. May also catalyze the transformation of estrone (E1) into estradiol (E2) and play a role in estrogen formation. The chain is Very-long-chain 3-oxoacyl-CoA reductase from Rattus norvegicus (Rat).